The chain runs to 202 residues: Recoverin (202 aa).

Gly2 is lipidated: N-myristoyl glycine. Residue Cys39 is modified to Cysteine sulfenic acid (-SOH). EF-hand domains follow at residues 41–59 (SGRITKQEFQSIYSKFFPE), 61–96 (DPKAYAQHVFRSFDANSDGTLDFKEYVIALHMTSAG), 97–132 (KTNQKLEWAFSLYDVDGNGAISKSEVLEIVMAIFKM), and 147–182 (TPEKRAEKIWGFFGKKDDDKLTEEEFIEGTLANKEI). Ca(2+) is bound by residues Asp74, Asn76, Asp78, Thr80, Glu85, Asp110, Asp112, Asn114, and Glu121. Residues 189-192 (EPRK) form an interaction with GRK1 region.

Belongs to the recoverin family. As to quaternary structure, homodimer; disulfide-linked. Homodimerization is caused by prolonged intense illumination. May form a complex composed of RHO, GRK1 and RCVRN in a Ca(2+)-dependent manner; RCVRN prevents the interaction between GRK1 and RHO. Interacts (via C-terminus) with GRK1 (via N-terminus); the interaction is Ca(2+)-dependent. Post-translationally, the N-terminal glycine is linked to one of four different types of acyl groups. The most abundant is myristoleate (14:1), but 14:0, 14:2, and 12:0 acyl residues are also present. The Ca(2+) induced exposure of the myristoyl group, known as the calcium-myristoyl switch, promotes RCVRN binding to the photoreceptor cell membranes only when intracellular Ca(2+) concentration is high. Oxidation on Cys-39 occurs in response to prolonged intense illumination and results in the formation of disulfide homodimers, and to a lesser extent disulfide-linked heterodimers.

Its subcellular location is the photoreceptor inner segment. The protein localises to the cell projection. It is found in the cilium. It localises to the photoreceptor outer segment. The protein resides in the photoreceptor outer segment membrane. Its subcellular location is the perikaryon. In terms of biological role, acts as a calcium sensor and regulates phototransduction of cone and rod photoreceptor cells. Modulates light sensitivity of cone photoreceptor in dark and dim conditions. In response to high Ca(2+) levels induced by low light levels, prolongs RHO/rhodopsin activation in rod photoreceptor cells by binding to and inhibiting GRK1-mediated phosphorylation of RHO/rhodopsin. Plays a role in scotopic vision/enhances vision in dim light by enhancing signal transfer between rod photoreceptors and rod bipolar cells. Improves rod photoreceptor sensitivity in dim light and mediates response of rod photoreceptors to facilitate detection of change and motion in bright light. This is Recoverin (RCVRN) from Canis lupus familiaris (Dog).